We begin with the raw amino-acid sequence, 953 residues long: 26S proteasome non-ATPase regulatory subunit 1 (953 aa).

Position 1 is an N-acetylmethionine (Met1). The residue at position 273 (Thr273) is a Phosphothreonine. The segment at 277 to 319 (SVPGSTNTGTVPGPEKDSDSMETEEKTAGAVAGKTPDASPEPK) is disordered. Over residues 290-303 (PEKDSDSMETEEKT) the composition is skewed to basic and acidic residues. An N6-acetyllysine modification is found at Lys310. Residue Thr311 is modified to Phosphothreonine. Ser315 bears the Phosphoserine mark. PC repeat units lie at residues 403 to 436 (TATASLGVIHKGHEKEALQLMATYLPKDTSPGSA), 441 to 474 (GGLYALGLIHANHGGDIIDYLLNQLKNASNDIVR), 476 to 510 (GGSLGLGLAAMGTARQDVYDLLKTNLYQDDAVTGE), 511 to 545 (AAGLALGLVMLGSKNTQAIEDMVGYAQETQHEKIL), 547 to 580 (GLAVGIALVMYGRMEEADALIESLCRDKDPILRR), 581 to 616 (SGMYTVAMAYCGSGNNKAIRRLLHVAVSDVNDDVRR), 617 to 649 (AAVESLGFILFRTPEQCPSVVSLLSESYNPHVR), 651 to 685 (GAAMALGVCCAGTGNKEAINLLEPMTNDPVNYVRQ), 686 to 726 (GALI…DVMA), and 729 to 761 (GAILAQGILDAGGHNVTISLQSRTGHTHMPSVV). An N6-acetyllysine modification is found at Lys720. Thr830 is modified (phosphothreonine). Ser834 is modified (phosphoserine). Disordered stretches follow at residues 839–881 (AKKK…LDNP) and 930–953 (AHGPKIEEEEQEPEPPEPFEYIDD). 2 stretches are compositionally biased toward basic and acidic residues: residues 842 to 852 (KEKEKEKKEEE) and 859 to 872 (AEKKEEKEKKKEPE). Residues 936–953 (EEEEQEPEPPEPFEYIDD) show a composition bias toward acidic residues.

The protein belongs to the proteasome subunit S1 family. In terms of assembly, component of the 19S proteasome regulatory particle complex. The 26S proteasome consists of a 20S core particle (CP) and two 19S regulatory subunits (RP). The regulatory particle is made of a lid composed of 9 subunits, a base containing 6 ATPases and few additional components including PSMD1. Interacts with ADRM1. Interacts with ZFAND1.

Its function is as follows. Component of the 26S proteasome, a multiprotein complex involved in the ATP-dependent degradation of ubiquitinated proteins. This complex plays a key role in the maintenance of protein homeostasis by removing misfolded or damaged proteins, which could impair cellular functions, and by removing proteins whose functions are no longer required. Therefore, the proteasome participates in numerous cellular processes, including cell cycle progression, apoptosis, or DNA damage repair. The sequence is that of 26S proteasome non-ATPase regulatory subunit 1 (Psmd1) from Rattus norvegicus (Rat).